A 382-amino-acid polypeptide reads, in one-letter code: C-type lectin domain-containing protein 38 (382 aa).

The Cytoplasmic segment spans residues 1–40 (MAIFYDDPLERLNQPIKTKSYRKKQVVQRVHVFIFDNWKL). A helical transmembrane segment spans residues 41–61 (ILLGILNLIFLIIAIVFAILF). Residues 62–382 (FVGSADCAQL…FFLCKRAIDF (321 aa)) are Extracellular-facing. The interval 97-116 (NAITTTQGTPSNKTSTTTPS) is disordered. Positions 100–116 (TTTQGTPSNKTSTTTPS) are enriched in low complexity. N-linked (GlcNAc...) asparagine glycans are attached at residues N108 and N189. C-type lectin domains lie at 129 to 250 (VGTK…FVCE) and 264 to 377 (YNKN…FLCK). Cystine bridges form between C150-C249, C223-C241, C285-C376, and C348-C368.

Expressed in ventral cord motor neurons and PLM touch neurons.

It is found in the membrane. Its function is as follows. Involved in negative modulation of unc-40-mediated axon outgrowth. Required for proper presynaptic development in axons that have reached their targets. May function in concert with E3 ubiquitin-protein ligase rpm-1 in regulating axon outgrowth. The sequence is that of C-type lectin domain-containing protein 38 from Caenorhabditis elegans.